A 69-amino-acid chain; its full sequence is Conotoxin Eb6.22 (69 aa).

The N-terminal stretch at V1 to A17 is a signal peptide. Residues E18–R41 constitute a propeptide that is removed on maturation. 3 disulfide bridges follow: C43–C57, C50–C61, and C56–C68.

This sequence belongs to the conotoxin O1 superfamily. As to expression, expressed by the venom duct.

The protein localises to the secreted. This chain is Conotoxin Eb6.22 (E1), found in Conus ebraeus (Hebrew cone).